We begin with the raw amino-acid sequence, 1382 residues long: ATP-dependent RNA helicase TDRD9 (1382 aa).

The disordered stretch occupies residues Ala-36 to Ala-62. A compositionally biased stretch (low complexity) spans Ala-47–Ala-62. Residues Val-142 to Asn-308 enclose the Helicase ATP-binding domain. Gly-155–Ser-162 is a binding site for ATP. Positions Asp-254–His-257 match the DEAH box motif. The Helicase C-terminal domain occupies Ser-377–Gly-544. Residues His-944–Leu-1004 enclose the Tudor domain.

Belongs to the DEAD box helicase family. DEAH subfamily. In terms of assembly, interacts with piRNA-associated proteins PIWIL1 and PIWIL4.

It is found in the cytoplasm. It localises to the nucleus. The catalysed reaction is ATP + H2O = ADP + phosphate + H(+). ATP-binding RNA helicase required during spermatogenesis. Required to repress transposable elements and prevent their mobilization, which is essential for the germline integrity. Acts via the piRNA metabolic process, which mediates the repression of transposable elements during meiosis by forming complexes composed of piRNAs and Piwi proteins and governs the methylation and subsequent repression of transposons. Acts downstream of piRNA biogenesis: exclusively required for transposon silencing in the nucleus, suggesting that it acts as a nuclear effector in the nucleus together with PIWIL4. In Homo sapiens (Human), this protein is ATP-dependent RNA helicase TDRD9.